Reading from the N-terminus, the 468-residue chain is Tyramine receptor tyra-2 (468 aa).

At 1-23 (MMSSYVMSPVDETYTLFQILKGS) the chain is on the extracellular side. Residues 24–43 (ALFLLVLWTIFANSLVFIVL) form a helical membrane-spanning segment. At 44-54 (YKNPRLQTVPN) the chain is on the cytoplasmic side. The chain crosses the membrane as a helical span at residues 55–77 (LLVGNLAFSDLALGLIVLPLSSV). At 78-91 (YAIAGEWVFPDALC) the chain is on the extracellular side. A disulfide bridge connects residues C91 and C177. The chain crosses the membrane as a helical span at residues 92 to 114 (EVFVSADILCSTASIWNLSIVGL). Residues 115–134 (DRYWAITSPVAYMSKRNKRT) lie on the Cytoplasmic side of the membrane. A helical transmembrane segment spans residues 135-157 (AGIMILSVWISSALISLAPLLGW). Residues 158-186 (KQTAQTPNLIYEKNNTVRQCTFLDLPSYT) are Extracellular-facing. N-linked (GlcNAc...) asparagine glycosylation is present at N171. Residues 187 to 209 (VYSATGSFFIPTLLMFFVYFKIY) traverse the membrane as a helical segment. At 210 to 387 (QAFAKHRARQ…SAAKERRGVK (178 aa)) the chain is on the cytoplasmic side. The disordered stretch occupies residues 252–306 (DEFAKEEEEEEDSESSGQVENGLGNGNDAIIEEDECEDEDSDEKRDDHTSMTTVT). Acidic residues-rich tracts occupy residues 255–265 (AKEEEEEEDSE) and 281–292 (IIEEDECEDEDS). A helical transmembrane segment spans residues 388–410 (VLGIILGCFTVCWAPFFTMYVLV). Topologically, residues 411–424 (QFCKDCSPNAHIEM) are extracellular. A helical membrane pass occupies residues 425 to 444 (FITWLGYSNSAMNPIIYTVF). The Cytoplasmic segment spans residues 445–468 (NRDYQIALKRLFTSEKKPSSTSRV).

This sequence belongs to the G-protein coupled receptor 1 family. As to expression, expressed in the pharyngeal neurons, MCL/R and NSML/R and the AS group of amphidial sensory neurons, ASEL/R, AGSL/R, ASHL/R and ASIL/R.

It localises to the cell membrane. In terms of biological role, G-protein coupled receptor for tyramine, a known neurotransmitter and neuromodulator and direct precursor of octopamine. Expression in amphidial sensory neurons suggests a role in chemosensation. This chain is Tyramine receptor tyra-2 (tyra-2), found in Caenorhabditis elegans.